The following is a 520-amino-acid chain: Cholesterol side-chain cleavage enzyme, mitochondrial (520 aa).

The transit peptide at 1 to 36 directs the protein to the mitochondrion; the sequence is MLAKGLSLRSVLAKGCQPFLSPTWQSSVLATGGGAN. Cys458 is a binding site for heme.

Belongs to the cytochrome P450 family. As to quaternary structure, interacts with FDX1/adrenodoxin. It depends on heme as a cofactor.

The protein localises to the mitochondrion inner membrane. It carries out the reaction 6 reduced [adrenodoxin] + cholesterol + 3 O2 + 6 H(+) = 4-methylpentanal + pregnenolone + 6 oxidized [adrenodoxin] + 4 H2O. The enzyme catalyses 2 reduced [adrenodoxin] + cholesterol + O2 + 2 H(+) = (22R)-hydroxycholesterol + 2 oxidized [adrenodoxin] + H2O. The catalysed reaction is (22R)-hydroxycholesterol + 2 reduced [adrenodoxin] + O2 + 2 H(+) = (20R,22R)-20,22-dihydroxycholesterol + 2 oxidized [adrenodoxin] + H2O. It catalyses the reaction (20R,22R)-20,22-dihydroxycholesterol + 2 reduced [adrenodoxin] + O2 + 2 H(+) = 4-methylpentanal + pregnenolone + 2 oxidized [adrenodoxin] + 2 H2O. Its pathway is lipid metabolism; C21-steroid hormone metabolism. The protein operates within steroid metabolism; cholesterol metabolism. In terms of biological role, a cytochrome P450 monooxygenase that catalyzes the side-chain hydroxylation and cleavage of cholesterol to pregnenolone, the precursor of most steroid hormones. Catalyzes three sequential oxidation reactions of cholesterol, namely the hydroxylation at C22 followed with the hydroxylation at C20 to yield 20R,22R-hydroxycholesterol that is further cleaved between C20 and C22 to yield the C21-steroid pregnenolone and 4-methylpentanal. Mechanistically, uses molecular oxygen inserting one oxygen atom into a substrate and reducing the second into a water molecule. Two electrons are provided by NADPH via a two-protein mitochondrial transfer system comprising flavoprotein FDXR (adrenodoxin/ferredoxin reductase) and nonheme iron-sulfur protein FDX1 or FDX2 (adrenodoxin/ferredoxin). The sequence is that of Cholesterol side-chain cleavage enzyme, mitochondrial (CYP11A1) from Mesocricetus auratus (Golden hamster).